Consider the following 336-residue polypeptide: D-erythrose-4-phosphate dehydrogenase (336 aa).

R11–I12 contributes to the NAD(+) binding site. Substrate is bound by residues S153–T155, R199, T212–K213, and R235. C154 functions as the Nucleophile in the catalytic mechanism. N317 is a binding site for NAD(+).

The protein belongs to the glyceraldehyde-3-phosphate dehydrogenase family. Epd subfamily. In terms of assembly, homotetramer.

It localises to the cytoplasm. It catalyses the reaction D-erythrose 4-phosphate + NAD(+) + H2O = 4-phospho-D-erythronate + NADH + 2 H(+). It participates in cofactor biosynthesis; pyridoxine 5'-phosphate biosynthesis; pyridoxine 5'-phosphate from D-erythrose 4-phosphate: step 1/5. Its function is as follows. Catalyzes the NAD-dependent conversion of D-erythrose 4-phosphate to 4-phosphoerythronate. The protein is D-erythrose-4-phosphate dehydrogenase of Aeromonas salmonicida (strain A449).